Reading from the N-terminus, the 87-residue chain is uncharacterized protein (87 aa).

Transmembrane regions (helical) follow at residues 10–30 (VAFT…FSIG) and 43–63 (GYYI…QKVT).

Its subcellular location is the cell membrane. This is an uncharacterized protein from Bacillus subtilis (strain 168).